The chain runs to 247 residues: Diglucosylglycerate octanoyltransferase (247 aa).

Belongs to the OctT acyltransferase family. As to quaternary structure, homotetramer.

It catalyses the reaction (2R)-2-O-[alpha-D-glucopyranosyl-(1-&gt;6)-alpha-D-glucopyranosyl]-glycerate + octanoyl-CoA = (2R)-2-O-[6-O-octanoyl-alpha-D-glucopyranosyl-(1-&gt;6)-alpha-D-glucopyranosyl]-glycerate + CoA. Sugar octanoyltransferase likely involved in the biosynthesis of mycobacterial methylglucose lipopolysaccharide (MGLP). Catalyzes the transfer of an octanoyl group from octanoyl-CoA to the C6 OH of the second glucose in diglucosylglycerate (DGG). DGG is the preferred acceptor, but to a lesser extent, GG (glucosylglycerate) can also be used as substrate. DGG and GG are the two earliest intermediates in MGLP biosynthesis. In Mycobacterium tuberculosis (strain ATCC 25618 / H37Rv), this protein is Diglucosylglycerate octanoyltransferase.